The primary structure comprises 94 residues: Pyrimidine/purine nucleoside phosphorylase (94 aa).

It belongs to the nucleoside phosphorylase PpnP family.

The catalysed reaction is a purine D-ribonucleoside + phosphate = a purine nucleobase + alpha-D-ribose 1-phosphate. It catalyses the reaction adenosine + phosphate = alpha-D-ribose 1-phosphate + adenine. It carries out the reaction cytidine + phosphate = cytosine + alpha-D-ribose 1-phosphate. The enzyme catalyses guanosine + phosphate = alpha-D-ribose 1-phosphate + guanine. The catalysed reaction is inosine + phosphate = alpha-D-ribose 1-phosphate + hypoxanthine. It catalyses the reaction thymidine + phosphate = 2-deoxy-alpha-D-ribose 1-phosphate + thymine. It carries out the reaction uridine + phosphate = alpha-D-ribose 1-phosphate + uracil. The enzyme catalyses xanthosine + phosphate = alpha-D-ribose 1-phosphate + xanthine. Its function is as follows. Catalyzes the phosphorolysis of diverse nucleosides, yielding D-ribose 1-phosphate and the respective free bases. Can use uridine, adenosine, guanosine, cytidine, thymidine, inosine and xanthosine as substrates. Also catalyzes the reverse reactions. This chain is Pyrimidine/purine nucleoside phosphorylase, found in Salmonella newport (strain SL254).